A 614-amino-acid chain; its full sequence is Sodium- and chloride-dependent betaine transporter (614 aa).

The tract at residues 1–33 (MDRKVAVPEDGPPVVSWLPEEGEKLDQEGEDQV) is disordered. Residues 1 to 44 (MDRKVAVPEDGPPVVSWLPEEGEKLDQEGEDQVKDRGQWTNKME) are Cytoplasmic-facing. A compositionally biased stretch (basic and acidic residues) spans 21–33 (EGEKLDQEGEDQV). Helical transmembrane passes span 45–65 (FVLS…FPYL), 73–92 (AFFI…VFFL), and 117–137 (GIGL…IIIL). Over 138–210 (AWALFYLFSS…SGIHDLGALR (73 aa)) the chain is Extracellular. Cys-157 and Cys-166 form a disulfide bridge. Asn-171 and Asn-183 each carry an N-linked (GlcNAc...) asparagine glycan. A run of 9 helical transmembrane segments spans residues 211–229 (WELA…FCIW), 238–255 (VVYF…ILLI), 291–308 (IFFS…LGSY), 320–341 (IALC…FSIL), 374–393 (MPLS…FLGL), 423–441 (LLIL…FLVT), 458–478 (GICL…VYGA), 499–518 (ISWL…FSLS), and 538–556 (IGWF…FVII). Residues 557 to 614 (TLLKTRGSFKKRLRQLTTPDPSLPQPKQHLYLDGGTSQDCGPSPTKEGLIVGEKETHL) lie on the Cytoplasmic side of the membrane. A disordered region spans residues 591-614 (GTSQDCGPSPTKEGLIVGEKETHL).

The protein belongs to the sodium:neurotransmitter symporter (SNF) (TC 2.A.22) family. SLC6A12 subfamily. As to quaternary structure, interacts with LIN7C. Kidney.

The protein resides in the basolateral cell membrane. It is found in the cell membrane. It catalyses the reaction 4-aminobutanoate(out) + chloride(out) + 3 Na(+)(out) = 4-aminobutanoate(in) + chloride(in) + 3 Na(+)(in). The enzyme catalyses glycine betaine(out) + 2 chloride(out) + 3 Na(+)(out) = glycine betaine(in) + 2 chloride(in) + 3 Na(+)(in). Transporter that mediates cellular uptake of betaine and GABA in a sodium- and chloride-dependent process. May have a role in regulation of GABAergic transmission in the brain through the reuptake of GABA into presynaptic terminals, as well as in osmotic regulation. Probably also involved in renal and hepatic osmotic regulation. The sequence is that of Sodium- and chloride-dependent betaine transporter (SLC6A12) from Canis lupus familiaris (Dog).